A 137-amino-acid polypeptide reads, in one-letter code: Molluscan insulin-related peptide 2 (137 aa).

The signal sequence occupies residues 1–31 (MVGVRLVFTNAFVVTVLLTLLLDVVVKPAEG). Gln-32 bears the Pyrrolidone carboxylic acid mark. 3 disulfides stabilise this stretch: Cys-47–Cys-123, Cys-59–Cys-136, and Cys-122–Cys-127. The propeptide at 71 to 83 (DAETGWLLPETMV) is C-beta peptide like. Positions 86–110 (NAETDLDDPLRNIKLSSESALTYLT) are cleaved as a propeptide — C-alpha peptide like. Gln-113 bears the Pyrrolidone carboxylic acid mark.

Belongs to the insulin family. Heterodimer of a B chain and an A chain linked by two disulfide bonds. As to expression, expressed in the cerebral light-green cells which are giant neuroendocrines cells involved in the control of growth.

The protein resides in the cytoplasmic vesicle. It localises to the secretory vesicle. The polypeptide is Molluscan insulin-related peptide 2 (Lymnaea stagnalis (Great pond snail)).